The primary structure comprises 376 residues: Nucleoside diphosphate kinase homolog 7 (376 aa).

A DM10 domain is found at 3-91; it reads HSERFVFIAE…YTARQLGSRK (89 aa).

The protein belongs to the NDK family. Component of sperm flagellar doublet microtubules. Component of the gamma-tubulin ring complex. In terms of processing, undergoes autophosphorylation. In terms of tissue distribution, expressed in airway epithelial cells.

It localises to the cytoplasm. The protein localises to the cytoskeleton. It is found in the microtubule organizing center. The protein resides in the centrosome. Its subcellular location is the nucleus. It localises to the spindle. The protein localises to the cilium axoneme. It is found in the flagellum axoneme. The protein resides in the cell projection. Its subcellular location is the cilium. Its function is as follows. Possesses an intrinsic kinase activity. Displays 3'-5' exonuclease activity with a preference for single-stranded DNA. Does not seem to have nucleoside diphosphate kinase activity. Functional component of the gamma-tubulin ring complex, implicated in the regulation of the microtubule-nucleating activity of the gamma-tubulin ring complex in centrosomes, in a kinase activity-dependent manner. Part of the dynein-decorated doublet microtubules (DMTs) in cilia axoneme, which is required for motile cilia beating. This is Nucleoside diphosphate kinase homolog 7 from Homo sapiens (Human).